The sequence spans 506 residues: Glycerol kinase (506 aa).

T14 is an ADP binding site. ATP contacts are provided by T14, T15, and S16. Residue T14 coordinates sn-glycerol 3-phosphate. R18 lines the ADP pocket. Sn-glycerol 3-phosphate contacts are provided by R84, E85, and Y136. The glycerol site is built by R84, E85, and Y136. H232 carries the post-translational modification Phosphohistidine; by HPr. D246 provides a ligand contact to sn-glycerol 3-phosphate. Glycerol contacts are provided by D246 and Q247. Positions 268 and 311 each coordinate ADP. ATP is bound by residues T268, G311, Q315, and G412. ADP contacts are provided by G412 and N416.

This sequence belongs to the FGGY kinase family. In terms of assembly, homotetramer and homodimer (in equilibrium). The phosphoenolpyruvate-dependent sugar phosphotransferase system (PTS), including enzyme I, and histidine-containing protein (HPr) are required for the phosphorylation of His-232, which leads to the activation of the enzyme.

It carries out the reaction glycerol + ATP = sn-glycerol 3-phosphate + ADP + H(+). It participates in polyol metabolism; glycerol degradation via glycerol kinase pathway; sn-glycerol 3-phosphate from glycerol: step 1/1. Activated by phosphorylation and inhibited by fructose 1,6-bisphosphate (FBP). Functionally, key enzyme in the regulation of glycerol uptake and metabolism. Catalyzes the phosphorylation of glycerol to yield sn-glycerol 3-phosphate. This chain is Glycerol kinase, found in Enterococcus casseliflavus (Enterococcus flavescens).